The primary structure comprises 347 residues: NADH-ubiquinone oxidoreductase chain 2 (347 aa).

Helical transmembrane passes span 4–21 (LALIMITTTIILGTVIVM), 26–44 (WLLVWIGFEMNMLAVIPVL), 59–79 (YFLTQATASMLLMLAVVTNLL), 93–115 (LASTVMTLALAMKLGLSPFHFWV), 149–169 (LNLNLLLAMATVSVAVGGWGG), 178–198 (ILAYSSIAHMGWMTIILTYNP), 200–220 (LTLLNLLLYILMTATTFMLFM), 241–261 (ATSVLIIMLSLGGLPPLSGFL), 274–294 (ESIFLPTLMAMMALLSLYFYM), and 323–343 (TPLLSPLIVMSTLALPLAPIL).

The protein belongs to the complex I subunit 2 family. As to quaternary structure, core subunit of respiratory chain NADH dehydrogenase (Complex I) which is composed of 45 different subunits. Interacts with TMEM242.

The protein resides in the mitochondrion inner membrane. The enzyme catalyses a ubiquinone + NADH + 5 H(+)(in) = a ubiquinol + NAD(+) + 4 H(+)(out). Its function is as follows. Core subunit of the mitochondrial membrane respiratory chain NADH dehydrogenase (Complex I) which catalyzes electron transfer from NADH through the respiratory chain, using ubiquinone as an electron acceptor. Essential for the catalytic activity and assembly of complex I. The sequence is that of NADH-ubiquinone oxidoreductase chain 2 from Cardioderma cor (Heart-nosed bat).